The chain runs to 235 residues: MNCPIIDQLERLTEHHFKDEERLKKALTHSSVQDSEQGNYERLEFLGDRVLGLLIAEMLYKLFPQASEGELSVRLNGLVNAQTCADIALEMGLPDMIHVGFEMRNLKGRRLTNMHADVIEALIAVMYLDGGLKSVRPFIRRYWQSRAKQMDAGRRDAKTELQEWAHVQGGVQPHYRVVKRSGPDHDPVFMVEVSILGFAPEIGQGNSKRCAERMAAEKVLRREGIWKTMGKNDHE.

The RNase III domain maps to 6–131; it reads IDQLERLTEH…LIAVMYLDGG (126 aa). Residue E44 coordinates Mg(2+). The active site involves D48. Residues D117 and E120 each coordinate Mg(2+). The active site involves E120. One can recognise a DRBM domain in the interval 156–225; it reads DAKTELQEWA…AEKVLRREGI (70 aa).

This sequence belongs to the ribonuclease III family. In terms of assembly, homodimer. It depends on Mg(2+) as a cofactor.

The protein localises to the cytoplasm. It carries out the reaction Endonucleolytic cleavage to 5'-phosphomonoester.. Its function is as follows. Digests double-stranded RNA. Involved in the processing of primary rRNA transcript to yield the immediate precursors to the large and small rRNAs (23S and 16S). Processes some mRNAs, and tRNAs when they are encoded in the rRNA operon. Processes pre-crRNA and tracrRNA of type II CRISPR loci if present in the organism. The chain is Ribonuclease 3 from Bartonella quintana (strain Toulouse) (Rochalimaea quintana).